Here is a 251-residue protein sequence, read N- to C-terminus: Probable transcriptional regulatory protein BLA_1344 (251 aa).

Belongs to the TACO1 family.

The protein localises to the cytoplasm. This chain is Probable transcriptional regulatory protein BLA_1344, found in Bifidobacterium animalis subsp. lactis (strain AD011).